The following is a 470-amino-acid chain: MLNFFYVKYKSLFKIIAILTFNILCYCRTVHSISKNDYTISNNLKLYPYSFVNFRPSPEMSQILKKKKLDSSSSEDFIPTKRITTLEELKNYERLEERTKVTITKDKIPLFAKNDMFRNTVRNPLNSIDYYKNDESDIRTYILKRWDLLPSPLRDLITNESIDHSTVTHKIKYEDITTEEAFKLVVNDDIGVMVGFETVGHIAHLNVPEERSSIKKLIAKIIIDKHKHIKTVINKRSEVQNQFRTMDIELLAGEENYIANLVIFVILMSFSFQMKQSLLVDMFAGAGPFAIYASKKGCSVLANDLNPIGATYMKRNIEINKVHDLVKVFNMDGREFLIDVIKKNKILDKKTLECDGMALKASGKVHLIMNLPKIAIEFLGNLVMKHRFSDTLIGLADNIEEENMRKLLVHCYCFSASEEYEKEIEQRLYKSIGRKLPEYTITHVRGVSPKKQMYCIEFECPISILRGNKE.

Residues 304-305 (DL), 332-333 (DG), and Asn-370 contribute to the S-adenosyl-L-methionine site.

Belongs to the class I-like SAM-binding methyltransferase superfamily. TRM5/TYW2 family. In terms of assembly, monomer.

It localises to the mitochondrion matrix. It is found in the nucleus. Its subcellular location is the cytoplasm. It catalyses the reaction guanosine(37) in tRNA + S-adenosyl-L-methionine = N(1)-methylguanosine(37) in tRNA + S-adenosyl-L-homocysteine + H(+). In terms of biological role, specifically methylates the N1 position of guanosine-37 in various cytoplasmic and mitochondrial tRNAs. Methylation is not dependent on the nature of the nucleoside 5' of the target nucleoside. This is the first step in the biosynthesis of wybutosine (yW), a modified base adjacent to the anticodon of tRNAs and required for accurate decoding. The sequence is that of tRNA (guanine(37)-N(1))-methyltransferase from Theileria parva (East coast fever infection agent).